The chain runs to 105 residues: Phosphoribosyl-ATP pyrophosphatase (105 aa).

Belongs to the PRA-PH family.

It localises to the cytoplasm. The catalysed reaction is 1-(5-phospho-beta-D-ribosyl)-ATP + H2O = 1-(5-phospho-beta-D-ribosyl)-5'-AMP + diphosphate + H(+). It participates in amino-acid biosynthesis; L-histidine biosynthesis; L-histidine from 5-phospho-alpha-D-ribose 1-diphosphate: step 2/9. In Ruthia magnifica subsp. Calyptogena magnifica, this protein is Phosphoribosyl-ATP pyrophosphatase.